The sequence spans 283 residues: 4-diphosphocytidyl-2-C-methyl-D-erythritol kinase (283 aa).

The active site involves Lys-13. 96 to 106 (PMGGGIGGGSS) contacts ATP. The active site involves Asp-138.

It belongs to the GHMP kinase family. IspE subfamily.

It catalyses the reaction 4-CDP-2-C-methyl-D-erythritol + ATP = 4-CDP-2-C-methyl-D-erythritol 2-phosphate + ADP + H(+). It participates in isoprenoid biosynthesis; isopentenyl diphosphate biosynthesis via DXP pathway; isopentenyl diphosphate from 1-deoxy-D-xylulose 5-phosphate: step 3/6. Catalyzes the phosphorylation of the position 2 hydroxy group of 4-diphosphocytidyl-2C-methyl-D-erythritol. In Pseudomonas fluorescens (strain Pf0-1), this protein is 4-diphosphocytidyl-2-C-methyl-D-erythritol kinase.